Consider the following 191-residue polypeptide: Fe/S biogenesis protein NfuA (191 aa).

[4Fe-4S] cluster-binding residues include cysteine 149 and cysteine 152.

Belongs to the NfuA family. As to quaternary structure, homodimer. [4Fe-4S] cluster serves as cofactor.

In terms of biological role, involved in iron-sulfur cluster biogenesis. Binds a 4Fe-4S cluster, can transfer this cluster to apoproteins, and thereby intervenes in the maturation of Fe/S proteins. Could also act as a scaffold/chaperone for damaged Fe/S proteins. The polypeptide is Fe/S biogenesis protein NfuA (Escherichia coli O7:K1 (strain IAI39 / ExPEC)).